The primary structure comprises 471 residues: Methylenetetrahydrofolate--tRNA-(uracil-5-)-methyltransferase TrmFO (471 aa).

13-18 (GGGLAG) is a binding site for FAD.

The protein belongs to the MnmG family. TrmFO subfamily. FAD serves as cofactor.

It is found in the cytoplasm. The enzyme catalyses uridine(54) in tRNA + (6R)-5,10-methylene-5,6,7,8-tetrahydrofolate + NADH + H(+) = 5-methyluridine(54) in tRNA + (6S)-5,6,7,8-tetrahydrofolate + NAD(+). The catalysed reaction is uridine(54) in tRNA + (6R)-5,10-methylene-5,6,7,8-tetrahydrofolate + NADPH + H(+) = 5-methyluridine(54) in tRNA + (6S)-5,6,7,8-tetrahydrofolate + NADP(+). In terms of biological role, catalyzes the folate-dependent formation of 5-methyl-uridine at position 54 (M-5-U54) in all tRNAs. This is Methylenetetrahydrofolate--tRNA-(uracil-5-)-methyltransferase TrmFO from Azorhizobium caulinodans (strain ATCC 43989 / DSM 5975 / JCM 20966 / LMG 6465 / NBRC 14845 / NCIMB 13405 / ORS 571).